Reading from the N-terminus, the 200-residue chain is V-set and transmembrane domain-containing protein 5 (200 aa).

Positions 1–28 (MRPLPSGRRKTRGISLGLFALCLAAARC) are cleaved as a signal peptide. Residues 29 to 147 (LQSQGVSLYI…VSEILYEDLH (119 aa)) lie on the Extracellular side of the membrane. An Ig-like C2-type domain is found at 37–139 (YIPQATINAT…QFGTIVLHVS (103 aa)). N-linked (GlcNAc...) asparagine glycosylation occurs at Asn-102. A helical membrane pass occupies residues 148–168 (FVAVILAFLAAVAAVLISLMW). Over 169–200 (VCNKCAYKFQRKRRHKLKESTTEEIELEDVEC) the chain is Cytoplasmic. The segment at 170-186 (CNKCAYKFQRKRRHKLK) is important for CDC42-dependent filopodia induction.

As to quaternary structure, can homooligomerize through cis interactions within the same cell membrane. Post-translationally, N-glycosylated.

The protein resides in the cell membrane. The protein localises to the cell projection. It localises to the dendrite. Its subcellular location is the axon. Its function is as follows. Cell adhesion-like membrane protein of the central nervous system (CNS) which modulates both the position and complexity of central neurons by altering their membrane morphology and dynamics. Involved in the formation of neuronal dendrites and protrusions including dendritic filopodia. In synaptogenesis, regulates synapse formation by altering dendritic spine morphology and actin distribution. Promotes formation of unstable neuronal spines such as thin and branched types. Regulates neuronal morphogenesis and migration during cortical development in the brain. This chain is V-set and transmembrane domain-containing protein 5 (VSTM5), found in Homo sapiens (Human).